The sequence spans 937 residues: MRVKDTLNLGKTKFKMRGNLPVKEVDRQKAWAENKMYEARQKLNEGKPTFILHDGPPYANGPIHMGHALNKISKDIIVRYKSMSGFRAPYVPGWDTHGLPIEQQLTKAGYDRKKMSTAEFRDLCREYALKQVDQQREGFKRLGVSAEWDNPYLTLKPEFEAAEVRVFGEMAKRGLIYKGKKPVYWSWSSESAMAEAEVEYHDVTSPSAFYGEQVVDGKGVLDTDTYLVVWTTTPWTIPGSEGITIDAGIEYAVVKPANDDRKFVLAADLVDQNAEMFGWEDVQVIKTVMGQDLDNVTAQHPFIADRKLVVMLGDFVTTESGTGLVHTAPGLGEDDFNVGALYHLPVLVPVDDKGYMTAEAGADFAGVFYEDANQIALDKLKAANALLKYMPYEHSYPFDWRTKKPVIFRATPQWFASVDKIRDEILAQLKDVKFQPDWGQRRLANMIKDRGDWVISRQRVWGVPLPIFYGEDGEAIITPETVDHVADLFAEYGSNIWFKREAKDLLPDGFTSEHSPNGEFTKETDIMDVWFDSGTSHQGVLAERDYLDFPADLYLEGSDQYRGWFNSSLITSVAATGKAPYKQVVSQGFTLDKDGHKMSKSLGNTIAPDEIISKMGADIVRLWVTSVDSSADVRVSTEAFVKISDSYKKLRNTMRYLLANTSDFDPQTDAIAVDDLQPVDRHMLYQLNEFAKSVRAHYDHYDFLNIYKELINFVVSDLSAFYLDFAKDILYIEAADSPVRRSMQTVFYQIAVSLTKLITPILPHTAEEIWDFLKEPEDFVQLAEMPAVLELTDANEQPDDGHQSAWDHFMTLRSHVLKALEEARDAKLIGKAAEAHLDLYVDEETKRLLDQLNVNVQQILLVSGLDVASLDQAPADALTFDHLAVKVTPAAGEVCDRCRLTKEDVGSDSAYPHFCARCAAIVRQNFPETATEGFDEN.

The short motif at Pro-57–His-67 is the 'HIGH' region element. Glu-556 serves as a coordination point for L-isoleucyl-5'-AMP. Positions Lys-597–Ser-601 match the 'KMSKS' region motif. Residue Lys-600 participates in ATP binding. The Zn(2+) site is built by Cys-895, Cys-898, Cys-915, and Cys-918.

It belongs to the class-I aminoacyl-tRNA synthetase family. IleS type 1 subfamily. As to quaternary structure, monomer. Requires Zn(2+) as cofactor.

The protein resides in the cytoplasm. It carries out the reaction tRNA(Ile) + L-isoleucine + ATP = L-isoleucyl-tRNA(Ile) + AMP + diphosphate. Catalyzes the attachment of isoleucine to tRNA(Ile). As IleRS can inadvertently accommodate and process structurally similar amino acids such as valine, to avoid such errors it has two additional distinct tRNA(Ile)-dependent editing activities. One activity is designated as 'pretransfer' editing and involves the hydrolysis of activated Val-AMP. The other activity is designated 'posttransfer' editing and involves deacylation of mischarged Val-tRNA(Ile). The chain is Isoleucine--tRNA ligase from Levilactobacillus brevis (strain ATCC 367 / BCRC 12310 / CIP 105137 / JCM 1170 / LMG 11437 / NCIMB 947 / NCTC 947) (Lactobacillus brevis).